The sequence spans 342 residues: UDP-xylose transporter 1 (342 aa).

10 helical membrane-spanning segments follow: residues 7–27 (MQMG…SIVI), 36–56 (LGFP…YCTL), 75–95 (VVLF…SLGF), 100–120 (FYQM…TLFL), 132–152 (LFLL…LNFV), 154–174 (SVLS…TNTI), 184–204 (QLLY…GPFV), 221–241 (IVVG…FSTF), 250–270 (VTYQ…GYTL), and 280–300 (IAGI…CSVA). Positions 305-342 (QASSDSTFLGKDRDTTPLLGQENENHHEAKKLDKHSPV) are disordered. The segment covering 327-342 (NENHHEAKKLDKHSPV) has biased composition (basic and acidic residues).

This sequence belongs to the TPT transporter family. TPT (TC 2.A.7.9) subfamily. Ubiquitous.

It is found in the golgi apparatus membrane. It localises to the endoplasmic reticulum membrane. Functionally, nucleotide-sugar transporter that transports UDP-xylose and UMP in a strict counter-exchange mode. The polypeptide is UDP-xylose transporter 1 (Arabidopsis thaliana (Mouse-ear cress)).